The chain runs to 207 residues: Small ribosomal subunit protein uS2 (207 aa).

It belongs to the universal ribosomal protein uS2 family.

The sequence is that of Small ribosomal subunit protein uS2 from Nitrosopumilus maritimus (strain SCM1).